Consider the following 173-residue polypeptide: Nicotinamide-nucleotide adenylyltransferase (173 aa).

Belongs to the archaeal NMN adenylyltransferase family.

The protein resides in the cytoplasm. The catalysed reaction is beta-nicotinamide D-ribonucleotide + ATP + H(+) = diphosphate + NAD(+). It functions in the pathway cofactor biosynthesis; NAD(+) biosynthesis; NAD(+) from nicotinamide D-ribonucleotide: step 1/1. The chain is Nicotinamide-nucleotide adenylyltransferase from Methanosarcina mazei (strain ATCC BAA-159 / DSM 3647 / Goe1 / Go1 / JCM 11833 / OCM 88) (Methanosarcina frisia).